The sequence spans 455 residues: Bifunctional protein GlmU (455 aa).

The tract at residues 1 to 228 is pyrophosphorylase; the sequence is MYKCALVLAA…FEETIGVNSR (228 aa). Residues 8–11, Lys22, Gln73, and 78–79 each bind UDP-N-acetyl-alpha-D-glucosamine; these read LAAG and GT. Asp103 contributes to the Mg(2+) binding site. Residues Gly140, Glu154, Asn169, and Asn226 each coordinate UDP-N-acetyl-alpha-D-glucosamine. A Mg(2+)-binding site is contributed by Asn226. The linker stretch occupies residues 229–249; it reads AQLAQAEEILKDRINLKHMEN. The interval 250-455 is N-acetyltransferase; it reads GVTLIDPKTT…GWVDKKGLKK (206 aa). Positions 331 and 349 each coordinate UDP-N-acetyl-alpha-D-glucosamine. Catalysis depends on His361, which acts as the Proton acceptor. 2 residues coordinate UDP-N-acetyl-alpha-D-glucosamine: Tyr364 and Asn375. Residues 384 to 385, Ala421, and Arg438 each bind acetyl-CoA; that span reads NY.

This sequence in the N-terminal section; belongs to the N-acetylglucosamine-1-phosphate uridyltransferase family. The protein in the C-terminal section; belongs to the transferase hexapeptide repeat family. Homotrimer. Requires Mg(2+) as cofactor.

The protein localises to the cytoplasm. The catalysed reaction is alpha-D-glucosamine 1-phosphate + acetyl-CoA = N-acetyl-alpha-D-glucosamine 1-phosphate + CoA + H(+). The enzyme catalyses N-acetyl-alpha-D-glucosamine 1-phosphate + UTP + H(+) = UDP-N-acetyl-alpha-D-glucosamine + diphosphate. It functions in the pathway nucleotide-sugar biosynthesis; UDP-N-acetyl-alpha-D-glucosamine biosynthesis; N-acetyl-alpha-D-glucosamine 1-phosphate from alpha-D-glucosamine 6-phosphate (route II): step 2/2. Its pathway is nucleotide-sugar biosynthesis; UDP-N-acetyl-alpha-D-glucosamine biosynthesis; UDP-N-acetyl-alpha-D-glucosamine from N-acetyl-alpha-D-glucosamine 1-phosphate: step 1/1. It participates in bacterial outer membrane biogenesis; LPS lipid A biosynthesis. Its function is as follows. Catalyzes the last two sequential reactions in the de novo biosynthetic pathway for UDP-N-acetylglucosamine (UDP-GlcNAc). The C-terminal domain catalyzes the transfer of acetyl group from acetyl coenzyme A to glucosamine-1-phosphate (GlcN-1-P) to produce N-acetylglucosamine-1-phosphate (GlcNAc-1-P), which is converted into UDP-GlcNAc by the transfer of uridine 5-monophosphate (from uridine 5-triphosphate), a reaction catalyzed by the N-terminal domain. The chain is Bifunctional protein GlmU from Clostridium botulinum (strain Eklund 17B / Type B).